Consider the following 136-residue polypeptide: Basic phospholipase A2 Tgc-K49 (136 aa).

A signal peptide spans 1-15 (MRTLWIVAVLLVGEG). Intrachain disulfides connect cysteine 41–cysteine 130, cysteine 43–cysteine 59, cysteine 58–cysteine 110, cysteine 64–cysteine 136, cysteine 65–cysteine 103, cysteine 72–cysteine 96, and cysteine 90–cysteine 101. Residue histidine 62 is part of the active site. The active site involves aspartate 104.

The protein belongs to the phospholipase A2 family. Group II subfamily. K49 sub-subfamily. Expressed by the venom gland.

Its subcellular location is the secreted. The enzyme catalyses a 1,2-diacyl-sn-glycero-3-phosphocholine + H2O = a 1-acyl-sn-glycero-3-phosphocholine + a fatty acid + H(+). In terms of biological role, PLA2 catalyzes the calcium-dependent hydrolysis of the 2-acyl groups in 3-sn-phosphoglycerides. This chain is Basic phospholipase A2 Tgc-K49, found in Trimeresurus gracilis (Kikuchi habu).